Reading from the N-terminus, the 165-residue chain is SsrA-binding protein (165 aa).

Residues Gln-135–Arg-158 are compositionally biased toward basic and acidic residues. The disordered stretch occupies residues Gln-135–Ser-165.

This sequence belongs to the SmpB family.

It localises to the cytoplasm. Functionally, required for rescue of stalled ribosomes mediated by trans-translation. Binds to transfer-messenger RNA (tmRNA), required for stable association of tmRNA with ribosomes. tmRNA and SmpB together mimic tRNA shape, replacing the anticodon stem-loop with SmpB. tmRNA is encoded by the ssrA gene; the 2 termini fold to resemble tRNA(Ala) and it encodes a 'tag peptide', a short internal open reading frame. During trans-translation Ala-aminoacylated tmRNA acts like a tRNA, entering the A-site of stalled ribosomes, displacing the stalled mRNA. The ribosome then switches to translate the ORF on the tmRNA; the nascent peptide is terminated with the 'tag peptide' encoded by the tmRNA and targeted for degradation. The ribosome is freed to recommence translation, which seems to be the essential function of trans-translation. The polypeptide is SsrA-binding protein (Mycolicibacterium vanbaalenii (strain DSM 7251 / JCM 13017 / BCRC 16820 / KCTC 9966 / NRRL B-24157 / PYR-1) (Mycobacterium vanbaalenii)).